We begin with the raw amino-acid sequence, 295 residues long: Ethanolamine ammonia-lyase small subunit (295 aa).

Residues valine 207, glutamate 228, and cysteine 258 each contribute to the adenosylcob(III)alamin site.

The protein belongs to the EutC family. In terms of assembly, the basic unit is a heterodimer which dimerizes to form tetramers. The heterotetramers trimerize; 6 large subunits form a core ring with 6 small subunits projecting outwards. Adenosylcob(III)alamin is required as a cofactor.

Its subcellular location is the bacterial microcompartment. It catalyses the reaction ethanolamine = acetaldehyde + NH4(+). It participates in amine and polyamine degradation; ethanolamine degradation. Its function is as follows. Catalyzes the deamination of various vicinal amino-alcohols to oxo compounds. Allows this organism to utilize ethanolamine as the sole source of nitrogen and carbon in the presence of external vitamin B12. The chain is Ethanolamine ammonia-lyase small subunit from Escherichia fergusonii (strain ATCC 35469 / DSM 13698 / CCUG 18766 / IAM 14443 / JCM 21226 / LMG 7866 / NBRC 102419 / NCTC 12128 / CDC 0568-73).